We begin with the raw amino-acid sequence, 309 residues long: tRNA dimethylallyltransferase (309 aa).

G9 to T16 contributes to the ATP binding site. A substrate-binding site is contributed by T11–T16. The tract at residues D34–Q37 is interaction with substrate tRNA.

It belongs to the IPP transferase family. Monomer. The cofactor is Mg(2+).

The enzyme catalyses adenosine(37) in tRNA + dimethylallyl diphosphate = N(6)-dimethylallyladenosine(37) in tRNA + diphosphate. In terms of biological role, catalyzes the transfer of a dimethylallyl group onto the adenine at position 37 in tRNAs that read codons beginning with uridine, leading to the formation of N6-(dimethylallyl)adenosine (i(6)A). The chain is tRNA dimethylallyltransferase from Clostridium acetobutylicum (strain ATCC 824 / DSM 792 / JCM 1419 / IAM 19013 / LMG 5710 / NBRC 13948 / NRRL B-527 / VKM B-1787 / 2291 / W).